The chain runs to 194 residues: dTTP/UTP pyrophosphatase (194 aa).

The active-site Proton acceptor is Asp73.

It belongs to the Maf family. YhdE subfamily. The cofactor is a divalent metal cation.

It localises to the cytoplasm. The catalysed reaction is dTTP + H2O = dTMP + diphosphate + H(+). It catalyses the reaction UTP + H2O = UMP + diphosphate + H(+). Nucleoside triphosphate pyrophosphatase that hydrolyzes dTTP and UTP. May have a dual role in cell division arrest and in preventing the incorporation of modified nucleotides into cellular nucleic acids. The polypeptide is dTTP/UTP pyrophosphatase (Clostridium botulinum (strain ATCC 19397 / Type A)).